We begin with the raw amino-acid sequence, 120 residues long: Chaperonin GroEL (120 aa).

23-27 lines the ATP pocket; that stretch reads DGTTT.

It belongs to the chaperonin (HSP60) family. In terms of assembly, forms a cylinder of 14 subunits composed of two heptameric rings stacked back-to-back. Interacts with the co-chaperonin GroES.

The protein localises to the cytoplasm. It catalyses the reaction ATP + H2O + a folded polypeptide = ADP + phosphate + an unfolded polypeptide.. Together with its co-chaperonin GroES, plays an essential role in assisting protein folding. The GroEL-GroES system forms a nano-cage that allows encapsulation of the non-native substrate proteins and provides a physical environment optimized to promote and accelerate protein folding. This Mycobacterium scrofulaceum protein is Chaperonin GroEL.